A 358-amino-acid polypeptide reads, in one-letter code: Trans-enoyl reductase milB (358 aa).

NADP(+) is bound by residues 48–51 (VDTK), 170–173 (ATAT), 193–196 (SAKH), Tyr-211, 258–259 (LD), and 349–350 (VR).

It belongs to the zinc-containing alcohol dehydrogenase family. Monomer.

It carries out the reaction 10 malonyl-CoA + acetyl-CoA + 3 AH2 + 8 NADPH + 18 H(+) = cordypyrone A + 3 A + 10 CO2 + 8 NADP(+) + 11 CoA + 8 H2O. Its pathway is secondary metabolite biosynthesis. Its function is as follows. Trans-enoyl reductase; part of the gene cluster that mediates the biosynthesis of cordypyrones A and B, 2 pyrones that show modest activities against pathogenic bacteria including methicillin-resistant Staphylococcus aureus (MRSA), Mycobacterium tuberculosis and Bacillus cereus. The HR-PKS milA catalyzes the formation of cordypyrones A via condensation of one acetate with 10 malonate units. Since milA lacks an enoyl reductase domain, the 2 beta-keto processing domains DH and KR of milA collaborate with the trans-enoyl reductase milB to catalyze the different levels of reduction. The cytochrome P450 monooxygenase milC then hydroxylates the C-22 of cordypyrones A to yield cordypyrones B. This is Trans-enoyl reductase milB from Cordyceps militaris (strain CM01) (Caterpillar fungus).